The sequence spans 579 residues: MSEKLPPGTLCAVCDDIATGKHYSVASCNGCKTFFRRALVNNREFVCQGNKDCPVNKGVRCACRYCRLQKCLAVGMDKNSIQNDRDRIGYTKRKRRHDDNDMEGGVHHSEHIRDGSSGSPQMNDESPESMDMKDIKIDLNCLDPIADRLTTLENNFTLLLSRCADLHSYATLEDALNAPSRFMQPISCEWSDNVVLTNRDDKLPFWRQRLIALYIDWAKTFSTFRSLPYADKVAMVTNHASSFMIMCEAFRTPEHMKSDVVRKRPDLPNIVTSNSGSGCSRVSSVAGSLVSNGEDVHDDLTNLLHAACIQQSINKGIMFGENSSDDKILLNLPIREIKKEPLEVPSTEGMIQLPTEYGNLPADYASWIPQDYGHPTAGHEGKSDMHNFFEARDFCVGRPSSCNLNERSMKTVSMLESRNFQSPSANNSSLSGITPVLTMMIDLVMKPFRQLNFSTTEFALLQAIMFFDPDTEGLDSASQRNVVAEQKKLLAVLFRHLQKAYNPQAASERYASIILRMPSIRRAAAKKNESLQVLDMLQMHEINSLVKETSLGPRPSNVQQRMGIGGGAGGCLTFPSQED.

A DNA-binding region (nuclear receptor) is located at residues 8–83 (GTLCAVCDDI…VGMDKNSIQN (76 aa)). NR C4-type zinc fingers lie at residues 11 to 31 (CAVCDDIATGKHYSVASCNGC) and 47 to 71 (CQGNKDCPVNKGVRCACRYCRLQKC). The segment at 87–128 (RIGYTKRKRRHDDNDMEGGVHHSEHIRDGSSGSPQMNDESPE) is disordered. Residues 104-114 (GGVHHSEHIRD) show a composition bias toward basic and acidic residues. In terms of domain architecture, NR LBD spans 164-553 (ADLHSYATLE…SLVKETSLGP (390 aa)).

Belongs to the nuclear hormone receptor family.

The protein localises to the nucleus. Its function is as follows. Orphan nuclear receptor. The sequence is that of Nuclear hormone receptor family member nhr-47 (nhr-47) from Caenorhabditis elegans.